The sequence spans 375 residues: MSCPVIELTQQLIRRPSLSPDDAGCQALLIERLQAIGFTVERMDFADTQNFWAWRGQGETLAFAGHTDVVPPGDADRWINPPFEPTIRDGMLFGRGAADMKGSLAAMVVAAERFVAQHPNHTGRLAFLITSDEEASAHNGTVKVVEALMARNERLDYCLVGEPSSIEVVGDVVKNGRRGSLTCNLTIHGVQGHVAYPHLADNPVHRAAPFLNELVAIEWDQGNEFFPATSMQIANIQAGTGSNNVIPGELFVQFNFRFSTELTDEMIKAQVLALLEKHQLRYTVDWWLSGQPFLTARGKLVDAVVNAVEHYNEIKPQLLTTGGTSDGRFIARMGAQVVELGPVNATIHKINECVNTADLQLLARMYQRIMEQLVA.

His66 provides a ligand contact to Zn(2+). Asp68 is an active-site residue. Asp99 is a Zn(2+) binding site. The Proton acceptor role is filled by Glu133. Positions 134, 162, and 348 each coordinate Zn(2+).

Belongs to the peptidase M20A family. DapE subfamily. Homodimer. Requires Zn(2+) as cofactor. The cofactor is Co(2+).

It carries out the reaction N-succinyl-(2S,6S)-2,6-diaminopimelate + H2O = (2S,6S)-2,6-diaminopimelate + succinate. It participates in amino-acid biosynthesis; L-lysine biosynthesis via DAP pathway; LL-2,6-diaminopimelate from (S)-tetrahydrodipicolinate (succinylase route): step 3/3. Functionally, catalyzes the hydrolysis of N-succinyl-L,L-diaminopimelic acid (SDAP), forming succinate and LL-2,6-diaminopimelate (DAP), an intermediate involved in the bacterial biosynthesis of lysine and meso-diaminopimelic acid, an essential component of bacterial cell walls. The polypeptide is Succinyl-diaminopimelate desuccinylase (Shigella boydii serotype 18 (strain CDC 3083-94 / BS512)).